Consider the following 862-residue polypeptide: ATP-dependent helicase Lhr-Core (862 aa).

ATP is bound by residues Gln-37, Lys-60, Thr-61, Asp-178, Glu-179, Val-360, Arg-377, and His-380. The 193-residue stretch at 41–233 folds into the Helicase ATP-binding domain; that stretch reads IMDIHRGRNV…FLVGYSYGSE (193 aa). The DEAH box signature appears at 178–181; it reads DEIH. The 156-residue stretch at 269–424 folds into the Helicase C-terminal domain; the sequence is ALYDILHDLI…SIKVPENCLD (156 aa). The interval 425 to 513 is WH domain; it reads VLAQHIYGMA…LYSTNIGTIP (89 aa). Residues 514–862 are domain 4; that stretch reads DRSAAVVKCG…HQAIIDEIKR (349 aa).

The protein belongs to the Lhr helicase family. Lhr-Core subfamily. Monomer.

It catalyses the reaction Couples ATP hydrolysis with the unwinding of duplex DNA by translocating in the 3'-5' direction.. It carries out the reaction ATP + H2O = ADP + phosphate + H(+). Functionally, DNA helicase that translocates in a 3'-5' direction on single-stranded (ss)DNA, probably involved in DNA repair. Most active on three- or four-stranded forked DNA; flayed structures and Holliday junction (HJ) substrates are unwound slightly less well. Also unwinds 3'-tailed duplexes; both RNA:DNA hybrids and double-stranded (ds)DNA with a 3'-single strand (ss)DNA loading strand are unwound. Substrates where the helicase loads on a 3'-ssRNA tail (DNA:RNA and RNA:RNA) were not tested. Blunt-ended dsDNA is not a substrate. Probably involved in replication-coupled DNA repair; remodeling of fork DNA after binding by Lhr generates ssDNA for ATP-dependent DNA translocation. This chain is ATP-dependent helicase Lhr-Core, found in Methanothermobacter thermautotrophicus (strain ATCC 29096 / DSM 1053 / JCM 10044 / NBRC 100330 / Delta H) (Methanobacterium thermoautotrophicum).